The following is a 465-amino-acid chain: Protein hedgehog (465 aa).

Cysteine 79 carries N-palmitoyl cysteine lipidation. Ca(2+)-binding residues include glutamate 143, glutamate 144, aspartate 149, threonine 179, glutamate 180, aspartate 183, and aspartate 185. A lipid anchor (Cholesterol glycine ester) is attached at glycine 251.

It belongs to the hedgehog family. In terms of assembly, interacts with shf. Post-translationally, the C-terminal part of the hedgehog protein precursor displays an autoproteolysis activity that results in the cleavage of the full-length protein into two parts (N-product and C-product). In addition, the C-terminal part displays a cholesterol transferase activity that results by the covalent attachment of a cholesterol moiety to the C-terminal of the newly generated N-product. The N-product is the active species in both local and long-range signaling, whereas the C-product has no signaling activity. Cholesterylation is required for N-product targeting to lipid rafts and multimerization. In terms of processing, N-palmitoylation by Rasp of the hedgehog N-product, within the secretory pathway, is required for the embryonic and larval patterning activities of the hedgehog signal.

The protein localises to the nucleus. It is found in the cytoplasm. Its subcellular location is the cell membrane. It catalyses the reaction glycyl-L-cysteinyl-[protein] + cholesterol + H(+) = [protein]-C-terminal glycyl cholesterol ester + N-terminal L-cysteinyl-[protein]. The C-terminal part of the hedgehog protein precursor displays an autoproteolysis activity that results in the cleavage of the full-length protein into two parts (N-product and C-product). In addition, the C-terminal part displays a cholesterol transferase activity that results by the covalent attachment of a cholesterol moiety to the C-terminal of the newly generated N-product. Once cleaved, the C-product has no signaling activity and diffuses from the cell. In terms of biological role, the dually lipidated hedgehog protein N-product is a morphogen which is essential for a variety of patterning events during development. Establishes the anterior-posterior axis of the embryonic segments and patterns the larval imaginal disks. Binds to the patched (ptc) receptor, which functions in association with smoothened (smo), to activate the transcription of target genes wingless (wg), decapentaplegic (dpp) and ptc. In the absence of hh, ptc represses the constitutive signaling activity of smo through fused (fu). Essential component of a signaling pathway which regulates the Duox-dependent gut immune response to bacterial uracil; required to activate Cad99C-dependent endosome formation, norpA-dependent Ca2+ mobilization and p38 MAPK, which are essential steps in the Duox-dependent production of reactive oxygen species (ROS) in response to intestinal bacterial infection. During photoreceptor differentiation, it up-regulates transcription of Ubr3, which in turn promotes the hh-signaling pathway by mediating the ubiquitination and degradation of cos. In Drosophila erecta (Fruit fly), this protein is Protein hedgehog.